The following is a 196-amino-acid chain: Aliphatic amidase regulator (196 aa).

Positions 129–190 (MAKLKQKTEQ…PILKIAQELL (62 aa)) constitute an ANTAR domain.

As to quaternary structure, forms a complex with AmiC.

Functionally, positive controlling element of AmiE, the gene for aliphatic amidase. Acts as a transcriptional antitermination factor. It is thought to allow RNA polymerase read through a rho-independent transcription terminator between the AmiE promoter and gene. This Pseudomonas aeruginosa (strain ATCC 15692 / DSM 22644 / CIP 104116 / JCM 14847 / LMG 12228 / 1C / PRS 101 / PAO1) protein is Aliphatic amidase regulator (amiR).